Reading from the N-terminus, the 440-residue chain is Ribosomal protein uS12 methylthiotransferase RimO (440 aa).

An MTTase N-terminal domain is found at 8–124; that stretch reads TSVFLLSLGC…VLDALGARYH (117 aa). Residues cysteine 17, cysteine 53, cysteine 87, cysteine 148, cysteine 152, and cysteine 155 each coordinate [4Fe-4S] cluster. In terms of domain architecture, Radical SAM core spans 134 to 363; the sequence is LTPPHSSYLK…MELQEEIARK (230 aa). The TRAM domain maps to 366–437; sequence EAFVGSLMTV…AYELHGTVES (72 aa).

This sequence belongs to the methylthiotransferase family. RimO subfamily. It depends on [4Fe-4S] cluster as a cofactor.

Its subcellular location is the cytoplasm. It carries out the reaction L-aspartate(89)-[ribosomal protein uS12]-hydrogen + (sulfur carrier)-SH + AH2 + 2 S-adenosyl-L-methionine = 3-methylsulfanyl-L-aspartate(89)-[ribosomal protein uS12]-hydrogen + (sulfur carrier)-H + 5'-deoxyadenosine + L-methionine + A + S-adenosyl-L-homocysteine + 2 H(+). In terms of biological role, catalyzes the methylthiolation of an aspartic acid residue of ribosomal protein uS12. The polypeptide is Ribosomal protein uS12 methylthiotransferase RimO (Chlorobium luteolum (strain DSM 273 / BCRC 81028 / 2530) (Pelodictyon luteolum)).